The sequence spans 316 residues: Putative mannose-6-phosphate isomerase YvyI (316 aa).

Positions 98, 116, and 173 each coordinate Zn(2+). R193 is an active-site residue.

The protein belongs to the mannose-6-phosphate isomerase type 1 family. Zn(2+) is required as a cofactor.

It catalyses the reaction D-mannose 6-phosphate = D-fructose 6-phosphate. This Bacillus subtilis (strain 168) protein is Putative mannose-6-phosphate isomerase YvyI (yvyI).